A 630-amino-acid polypeptide reads, in one-letter code: tRNA uridine 5-carboxymethylaminomethyl modification enzyme MnmG (630 aa).

13-18 (GGGHAG) lines the FAD pocket. 273-287 (GPRYCPSIEDKIHRF) provides a ligand contact to NAD(+).

It belongs to the MnmG family. Homodimer. Heterotetramer of two MnmE and two MnmG subunits. It depends on FAD as a cofactor.

The protein resides in the cytoplasm. Functionally, NAD-binding protein involved in the addition of a carboxymethylaminomethyl (cmnm) group at the wobble position (U34) of certain tRNAs, forming tRNA-cmnm(5)s(2)U34. The chain is tRNA uridine 5-carboxymethylaminomethyl modification enzyme MnmG from Pseudomonas putida (strain ATCC 700007 / DSM 6899 / JCM 31910 / BCRC 17059 / LMG 24140 / F1).